The chain runs to 453 residues: Homeobox protein meis3 (453 aa).

Residues 33-64 (HHSLSQSAPYGSTGAAHRVPMPPGMGSNDGLK) form a disordered region. In terms of domain architecture, MEIS N-terminal spans 102–185 (GGDVCSSDSF…PIDLVIDDRD (84 aa)). Residues 192-272 (LEDFTGSCTS…RDKKRNKKRG (81 aa)) form a disordered region. Over residues 197–209 (GSCTSLSDQNNSW) the composition is skewed to polar residues. A compositionally biased stretch (low complexity) spans 218–230 (STHSGTPGPSSGG). Residues 231-242 (LASQSGDNSSEQ) show a composition bias toward polar residues. Positions 267–329 (RNKKRGIFPK…NARRRIVQPM (63 aa)) form a DNA-binding region, homeobox.

Belongs to the TALE/MEIS homeobox family.

The protein localises to the nucleus. Functionally, a caudalizing protein which is required to pattern the anterior/posterior (A/P) axis during central nervous system (CNS) formation. Inhibits anterior neural expression and acts as a transcriptional activator to induce posterior neural gene expression. Maintains a proper A/P balance required for hindbrain formation by activating the FGF/MAPK pathway, which modulates the planar cell polarity (PCP) pathway. Interacts with retinoid signaling during hindbrain patterning. The chain is Homeobox protein meis3 from Xenopus tropicalis (Western clawed frog).